The sequence spans 67 residues: Cell division protein ZapB (67 aa).

Positions Leu3–Val59 form a coiled coil.

The protein belongs to the ZapB family. As to quaternary structure, homodimer. The ends of the coiled-coil dimer bind to each other, forming polymers. Interacts with FtsZ.

Its subcellular location is the cytoplasm. Non-essential, abundant cell division factor that is required for proper Z-ring formation. It is recruited early to the divisome by direct interaction with FtsZ, stimulating Z-ring assembly and thereby promoting cell division earlier in the cell cycle. Its recruitment to the Z-ring requires functional FtsA or ZipA. The sequence is that of Cell division protein ZapB from Shewanella amazonensis (strain ATCC BAA-1098 / SB2B).